The primary structure comprises 79 residues: D-alanyl carrier protein (79 aa).

Residues 1 to 77 (MDTKQGVLDI…KIVAKVESLE (77 aa)) form the Carrier domain. At Ser35 the chain carries O-(pantetheine 4'-phosphoryl)serine.

The protein belongs to the DltC family. 4'-phosphopantetheine is transferred from CoA to a specific serine of apo-DCP.

It is found in the cytoplasm. The protein operates within cell wall biogenesis; lipoteichoic acid biosynthesis. In terms of biological role, carrier protein involved in the D-alanylation of lipoteichoic acid (LTA). The loading of thioester-linked D-alanine onto DltC is catalyzed by D-alanine--D-alanyl carrier protein ligase DltA. The DltC-carried D-alanyl group is further transferred to cell membrane phosphatidylglycerol (PG) by forming an ester bond, probably catalyzed by DltD. D-alanylation of LTA plays an important role in modulating the properties of the cell wall in Gram-positive bacteria, influencing the net charge of the cell wall. The protein is D-alanyl carrier protein of Lactobacillus helveticus (strain DPC 4571).